The following is a 498-amino-acid chain: Hyaluronan-mediated motility receptor (498 aa).

A required for interaction with FAM83D region spans residues 150–331; it reads EEMTSERNVF…ITDLQNQLRQ (182 aa). Residues N262 and N302 are each glycosylated (N-linked (GlcNAc...) asparagine). Hyaluronic acid-binding stretches follow at residues 420 to 430 and 442 to 451; these read KQKIKHVVKLK and KLRSQLAKRK. N483 carries N-linked (GlcNAc...) asparagine glycosylation. T488 carries the phosphothreonine modification.

In terms of assembly, interacts with ANKRD26. Interacts with DYNLL1. Interacts with FAM83D/CHICA.

Its subcellular location is the cell surface. It localises to the cytoplasm. It is found in the cytoskeleton. The protein resides in the spindle. Its function is as follows. Receptor for hyaluronic acid (HA). Involved in cell motility. When hyaluronan binds to HMMR, the phosphorylation of a number of proteins, including the PTK2/FAK1 occurs. May also be involved in cellular transformation and metastasis formation, and in regulating extracellular-regulated kinase (ERK) activity. May act as a regulator of adipogenisis. The protein is Hyaluronan-mediated motility receptor (Hmmr) of Rattus norvegicus (Rat).